The following is a 365-amino-acid chain: Transcription factor TCP2 (365 aa).

The region spanning 42–100 (GKDRHSKVLTSKGPRDRRVRLSVSTALQFYDLQDRLGYDQPSKAVEWLIKAAEDSISEL) is the TCP domain. Residues 130 to 150 (KSACSSNSDTSKNSSGLSLSR) show a composition bias toward low complexity. Disordered stretches follow at residues 130–202 (KSAC…SAPS) and 220–245 (QTHF…HPHH). The 22-residue stretch at 151-172 (SELRDKARERARERTAKETKER) folds into the R domain. The segment covering 151 to 176 (SELRDKARERARERTAKETKERDHNH) has biased composition (basic and acidic residues). A compositionally biased stretch (polar residues) spans 177-202 (TSFTDLLNSGSDPVNSNRQWMASAPS).

As to quaternary structure, interacts with SPL. Interacts with CRY1. As to expression, expressed in cotyledons, particularly in the vascular region, in leaves, roots, buds, flowers and immature siliques.

Its subcellular location is the nucleus. Functionally, plays a pivotal role in the control of morphogenesis of shoot organs by negatively regulating the expression of boundary-specific genes such as CUC genes, probably through the induction of miRNA (e.g. miR164). Participates in ovule development. Promotes light-regulated transcription of CHS, CAB, HYH and HY5. Positively regulates photomorphogenesis (e.g. hypocotyl elongation inhibition and cotyledon opening in response to blue light). The protein is Transcription factor TCP2 of Arabidopsis thaliana (Mouse-ear cress).